The following is a 51-amino-acid chain: Ribosome biogenesis protein Nop10 (51 aa).

The protein belongs to the NOP10 family.

Its function is as follows. Involved in ribosome biogenesis; more specifically in 18S rRNA pseudouridylation and in cleavage of pre-rRNA. In Nitrosopumilus maritimus (strain SCM1), this protein is Ribosome biogenesis protein Nop10.